A 182-amino-acid chain; its full sequence is Methyl-CpG-binding domain-containing protein 5 (182 aa).

2 disordered regions span residues 1 to 56 (MSNG…GTVD) and 80 to 126 (HGTP…KPLN). Positions 25-101 (KRATPGDDNW…ENGDSHSEHS (77 aa)) constitute an MBD domain. Basic and acidic residues predominate over residues 92–105 (ENGDSHSEHSEGRG). Over residues 106–115 (SARRQTKSNK) the composition is skewed to basic residues.

Homodimer and heterodimer with MBD6. Interacts with DDM1 via its MBD domain. Mostly expressed in flowers, and, to a lower extent, in seedlings, buds, stems and mature seeds, but barely in roots, exclusively in root meristem cells at tips (at protein level).

The protein localises to the nucleus. It is found in the chromosome. Functionally, transcriptional regulator that binds CpG islands in promoters where the DNA is methylated at position 5 of cytosine within CpG dinucleotides. In addition, binds specifically methylated m(5)CpNpN but not m(5)CpNpG (N is A, T or C). Plays probably a role in gene silencing. This is Methyl-CpG-binding domain-containing protein 5 (MBD5) from Arabidopsis thaliana (Mouse-ear cress).